The sequence spans 121 residues: Autophagy-related protein 8 (121 aa).

Residue G116 is the site of Phosphatidylethanolamine amidated glycine attachment. The propeptide at 117 to 121 (DFETA) is removed in mature form.

It belongs to the ATG8 family. The C-terminal 5 residues are removed to expose Gly-116 at the C-terminus. The C-terminal Gly is then amidated with phosphatidylethanolamine by an activating system similar to that for ubiquitin.

The protein resides in the cytoplasmic vesicle. Its subcellular location is the autophagosome membrane. It localises to the vacuole membrane. Its function is as follows. Ubiquitin-like modifier involved in autophagosome formation. With cpr-1/atg4, mediates the delivery of the autophagosomes to the vacuole via the microtubule cytoskeleton. Required for selective autophagic degradation of the nucleus (nucleophagy) as well as for mitophagy which contributes to regulate mitochondrial quantity and quality by eliminating the mitochondria to a basal level to fulfill cellular energy requirements and preventing excess ROS production. Also participates in membrane fusion events that take place in the early secretory pathway. Also involved in endoplasmic reticulum-specific autophagic process and is essential for the survival of cells subjected to severe ER stress. The apg-6/atg8-PE conjugate mediates tethering between adjacent membranes and stimulates membrane hemifusion, leading to expansion of the autophagosomal membrane during autophagy. This chain is Autophagy-related protein 8 (apg-6), found in Neurospora crassa (strain ATCC 24698 / 74-OR23-1A / CBS 708.71 / DSM 1257 / FGSC 987).